A 541-amino-acid chain; its full sequence is Putative asparagine synthetase [glutamine-hydrolyzing] 1 (541 aa).

The active-site For GATase activity is the Cys-2. Residues 2 to 213 (CSISGIIVKD…PNSQLIYYLD (212 aa)) form the Glutamine amidotransferase type-2 domain. L-glutamine-binding positions include 68–72 (RLAIV), 92–94 (NGE), and Asp-116. Residues Val-289 and 363 to 364 (SG) contribute to the ATP site.

This sequence belongs to the asparagine synthetase family.

The catalysed reaction is L-aspartate + L-glutamine + ATP + H2O = L-asparagine + L-glutamate + AMP + diphosphate + H(+). Its pathway is amino-acid biosynthesis; L-asparagine biosynthesis; L-asparagine from L-aspartate (L-Gln route): step 1/1. The sequence is that of Putative asparagine synthetase [glutamine-hydrolyzing] 1 from Methanocaldococcus jannaschii (strain ATCC 43067 / DSM 2661 / JAL-1 / JCM 10045 / NBRC 100440) (Methanococcus jannaschii).